Reading from the N-terminus, the 606-residue chain is Zinc metalloproteinase-disintegrin-like HF3 (606 aa).

The N-terminal stretch at M1–S20 is a signal peptide. A propeptide spanning residues I21–A190 is cleaved from the precursor. Residues K199 to P395 form the Peptidase M12B domain. E202 contacts Ca(2+). N-linked (GlcNAc...) asparagine glycosylation is present at N259. D286 is a binding site for Ca(2+). Cystine bridges form between C310–C390, C350–C374, and C352–C357. An N-linked (GlcNAc...) asparagine glycan is attached at N313. H335 serves as a coordination point for Zn(2+). Residue E336 is part of the active site. H339 and H345 together coordinate Zn(2+). N373 carries an N-linked (GlcNAc...) asparagine glycan. The Ca(2+) site is built by C390, N393, V405, N408, L410, E412, E415, and D418. The region spanning P403–N489 is the Disintegrin domain. 14 disulfides stabilise this stretch: C406/C435, C417/C430, C419/C425, C429/C452, C443/C449, C448/C474, C461/C481, C468/C500, C493/C505, C512/C562, C527/C569, C540/C550, C557/C594, and C588/C599. Positions E467–D469 match the D/ECD-tripeptide motif. Ca(2+) is bound by residues D469, E472, and D484. An N-linked (GlcNAc...) asparagine glycan is attached at N519. An N-linked (GlcNAc...) asparagine glycan is attached at N584.

This sequence belongs to the venom metalloproteinase (M12B) family. P-III subfamily. P-IIIa sub-subfamily. As to quaternary structure, monomer. Zn(2+) serves as cofactor. As to expression, expressed by the venom gland.

The protein localises to the secreted. In terms of biological role, the metalloproteinase-disintegrin-like HF3 is a potent hemorrhagic toxin that activates macrophages for phagocytosis through integrin alpha-M/beta-2 (ITGAM/ITGB2). It inhibits collagen-induced platelet aggregation. This protein shows cleavage specificity for substrate for leucine at P1' position, followed by hydrophobic residues in P2'. In Bothrops jararaca (Jararaca), this protein is Zinc metalloproteinase-disintegrin-like HF3.